The primary structure comprises 210 residues: Na(+)-translocating NADH-quinone reductase subunit D (210 aa).

Helical transmembrane passes span 10–30, 42–62, 72–92, 103–123, 143–163, and 178–198; these read VLFG…GVCS, LVMS…ISMI, IIVQ…ILKA, VFVG…AFAM, FVLI…ILGF, and NGLL…IWFI.

This sequence belongs to the NqrDE/RnfAE family. As to quaternary structure, composed of six subunits; NqrA, NqrB, NqrC, NqrD, NqrE and NqrF.

It is found in the cell inner membrane. It catalyses the reaction a ubiquinone + n Na(+)(in) + NADH + H(+) = a ubiquinol + n Na(+)(out) + NAD(+). In terms of biological role, NQR complex catalyzes the reduction of ubiquinone-1 to ubiquinol by two successive reactions, coupled with the transport of Na(+) ions from the cytoplasm to the periplasm. NqrA to NqrE are probably involved in the second step, the conversion of ubisemiquinone to ubiquinol. This chain is Na(+)-translocating NADH-quinone reductase subunit D, found in Pseudoalteromonas atlantica (strain T6c / ATCC BAA-1087).